The following is a 142-amino-acid chain: Large ribosomal subunit protein bL17 (142 aa).

The protein belongs to the bacterial ribosomal protein bL17 family. As to quaternary structure, part of the 50S ribosomal subunit. Contacts protein L32.

The sequence is that of Large ribosomal subunit protein bL17 from Rickettsia bellii (strain OSU 85-389).